Reading from the N-terminus, the 856-residue chain is DNA mismatch repair protein MutS (856 aa).

618–625 (GPNMGGKS) is an ATP binding site.

This sequence belongs to the DNA mismatch repair MutS family.

Functionally, this protein is involved in the repair of mismatches in DNA. It is possible that it carries out the mismatch recognition step. This protein has a weak ATPase activity. The chain is DNA mismatch repair protein MutS from Shewanella baltica (strain OS195).